A 346-amino-acid polypeptide reads, in one-letter code: Very-long-chain 3-oxoacyl-CoA reductase (346 aa).

The chain crosses the membrane as a helical span at residues 26 to 46 (SAYFLLAAGSLFVASRALTFV). Val71, Asp126, Asp134, Asn153, Tyr220, Lys224, Ile253, and Ser255 together coordinate NADP(+). The active-site Proton donor is Tyr220. Lys224 serves as the catalytic Lowers pKa of active site Tyr.

The protein belongs to the short-chain dehydrogenases/reductases (SDR) family.

The protein localises to the endoplasmic reticulum membrane. It catalyses the reaction a very-long-chain (3R)-3-hydroxyacyl-CoA + NADP(+) = a very-long-chain 3-oxoacyl-CoA + NADPH + H(+). Its pathway is lipid metabolism; fatty acid biosynthesis. Functionally, component of the microsomal membrane bound fatty acid elongation system, which produces the 26-carbon very long-chain fatty acids (VLCFA) from palmitate. Catalyzes the reduction of the 3-ketoacyl-CoA intermediate that is formed in each cycle of fatty acid elongation. VLCFAs serve as precursors for ceramide and sphingolipids. This Aspergillus oryzae (strain ATCC 42149 / RIB 40) (Yellow koji mold) protein is Very-long-chain 3-oxoacyl-CoA reductase.